A 286-amino-acid polypeptide reads, in one-letter code: ATP synthase gamma chain (286 aa).

It belongs to the ATPase gamma chain family. In terms of assembly, F-type ATPases have 2 components, CF(1) - the catalytic core - and CF(0) - the membrane proton channel. CF(1) has five subunits: alpha(3), beta(3), gamma(1), delta(1), epsilon(1). CF(0) has three main subunits: a, b and c.

The protein resides in the cell inner membrane. Its function is as follows. Produces ATP from ADP in the presence of a proton gradient across the membrane. The gamma chain is believed to be important in regulating ATPase activity and the flow of protons through the CF(0) complex. This Shewanella pealeana (strain ATCC 700345 / ANG-SQ1) protein is ATP synthase gamma chain.